Reading from the N-terminus, the 360-residue chain is S-adenosylmethionine:tRNA ribosyltransferase-isomerase (360 aa).

Belongs to the QueA family. In terms of assembly, monomer.

It localises to the cytoplasm. The enzyme catalyses 7-aminomethyl-7-carbaguanosine(34) in tRNA + S-adenosyl-L-methionine = epoxyqueuosine(34) in tRNA + adenine + L-methionine + 2 H(+). It functions in the pathway tRNA modification; tRNA-queuosine biosynthesis. Its function is as follows. Transfers and isomerizes the ribose moiety from AdoMet to the 7-aminomethyl group of 7-deazaguanine (preQ1-tRNA) to give epoxyqueuosine (oQ-tRNA). This is S-adenosylmethionine:tRNA ribosyltransferase-isomerase from Burkholderia mallei (strain NCTC 10247).